Consider the following 683-residue polypeptide: Cysteine-rich receptor-like protein kinase 28 (683 aa).

The first 24 residues, 1–24, serve as a signal peptide directing secretion; sequence MEHVRVIFFFFACVLKIVPFICLA. Residues 25 to 288 are Extracellular-facing; it reads QKDKYEFPPG…RTGKGKGGSK (264 aa). Gnk2-homologous domains are found at residues 32-136 and 142-251; these read PPGF…NMII and TTPT…TWRF. N-linked (GlcNAc...) asparagine glycans are attached at residues N43, N47, N73, and N153. The segment at 263–283 is disordered; that stretch reads PAIQPADSPTSAARTERTGKG. The chain crosses the membrane as a helical span at residues 289–309; it reads VIVAIVIPIVFVALFAICLCL. At 310-683 the chain is on the cytoplasmic side; the sequence is LLKWKKNKSV…DVTVSELSPR (374 aa). Residues 361-641 enclose the Protein kinase domain; that stretch reads FSPENELGRG…ALMLNSYSYT (281 aa). Residues 367–375 and K389 contribute to the ATP site; that span reads LGRGGFGSV. The residue at position 434 (Y434) is a Phosphotyrosine. Catalysis depends on D486, which acts as the Proton acceptor. Phosphoserine is present on S490. T528 bears the Phosphothreonine mark. A Phosphotyrosine modification is found at Y536.

This sequence belongs to the protein kinase superfamily. Ser/Thr protein kinase family. CRK subfamily.

It localises to the membrane. The enzyme catalyses L-seryl-[protein] + ATP = O-phospho-L-seryl-[protein] + ADP + H(+). It carries out the reaction L-threonyl-[protein] + ATP = O-phospho-L-threonyl-[protein] + ADP + H(+). This chain is Cysteine-rich receptor-like protein kinase 28 (CRK28), found in Arabidopsis thaliana (Mouse-ear cress).